Consider the following 523-residue polypeptide: Glycine betaine transporter 1 (523 aa).

Helical transmembrane passes span 33-53 (VFGISAGFIALFLVAALVLDA), 71-91 (FDWLFIIAGNIFVIFCLALIV), 109-129 (SFMSWLAMLFAAGMGIGLMFW), 165-185 (FHWGLHPWAIYGVVALSLAFF), 214-234 (IVDILAVLATLFGLATSLGLG), 251-271 (GLGLQIVVITVVTLLAVVSVV), 286-306 (MVVAFLLLILVGLIGWAASLG), 337-357 (WTVFYWAWWISWSPFVGMFIA), 372-392 (VLIVPTVVTVVWMSVFGGLAI), 420-440 (VLPFGNILSIIAVVLVLVFFI), 467-487 (VFWAFMEGAIAVALLWIGGSE), and 496-516 (AISTALPFTFILLAMCVSLLM).

It belongs to the BCCT transporter (TC 2.A.15) family.

It localises to the cell inner membrane. Functionally, involved in the uptake of the osmoprotectant glycine betaine. This chain is Glycine betaine transporter 1, found in Vibrio parahaemolyticus serotype O3:K6 (strain RIMD 2210633).